Consider the following 150-residue polypeptide: Small ribosomal subunit protein eS19S (150 aa).

It belongs to the eukaryotic ribosomal protein eS19 family.

This Ascaris suum (Pig roundworm) protein is Small ribosomal subunit protein eS19S (RPS19S).